We begin with the raw amino-acid sequence, 443 residues long: MHRASSKHTNAKKEAISTSKIRDNNVRVTRSRAKALGVSNSPSKPAFKHETKRVARPSNKRMASDNITVCNQKRRAVLKDVTNTLAESIISTEGNVKACKRGGKETKQIEEDGLVDVDGEKSKLAEDLSKIRMVESLDASASKQKLVDCAEEDRSDVTDCVQIVDIDSGVQDPQFCSLYAASIYDSINVAELEQRPSTSYMVQVQRDIDPTMRGILIDWLVEVSEEYKLVSDTLYLTVNLIDRFMSHNYIEKQKLQLLGITCMLIASKYEEISAPRLEEFCFITDNTYTRLEVLSMEIKVLNSLHFRLSVPTTKTFLRRFIRAAQASDKVPLIEMEYLANYFAELTLTEYTFLRFLPSLIAASAVFLARWTLDQSNHPWNQTLQHYTRYETSALKNTVLAMEELQLNTSGSTLIAIHTKYNQQKFKRVATLTSPERVNTLFSR.

Basic residues predominate over residues 1-10 (MHRASSKHTN). A disordered region spans residues 1–61 (MHRASSKHTN…KRVARPSNKR (61 aa)). Residues 11–25 (AKKEAISTSKIRDNN) show a composition bias toward basic and acidic residues.

It belongs to the cyclin family. Cyclin AB subfamily. Expressed in tissues with active cell division: apical root and shoot meristems, lateral root and leaf primordia, floral meristems and developing pollen.

In terms of biological role, may negatively regulate endocycles and act as a regulator of ploidy levels in endoreduplication. This is Cyclin-A2-1 (CYCA2-1) from Arabidopsis thaliana (Mouse-ear cress).